Here is a 128-residue protein sequence, read N- to C-terminus: Large ribosomal subunit protein bL17 (128 aa).

Belongs to the bacterial ribosomal protein bL17 family. In terms of assembly, part of the 50S ribosomal subunit. Contacts protein L32.

In Streptococcus mutans serotype c (strain ATCC 700610 / UA159), this protein is Large ribosomal subunit protein bL17.